Here is a 402-residue protein sequence, read N- to C-terminus: MNEFPVVLVINCGSSSIKFSVLDVATCDVLMAGIADGMNTENAFLSINGDKPINLAHSNYEDALKAIAFELEKRDLTDSVALIGHRIAHGGELFTQSVIITDEIIDNIRRVSPLAPLHNYANLSGIDAARHLFPAVRQVAVFDTSFHQTLAPEAYLYGLPWEYFSSLGVRRYGFHGTSHRYVSRRAYELLDLDEKNSGLIVAHLGNGASICAVRNGQSVDTSMGMTPLEGLMMGTRSGDVDFGAMAWIAKETGQTLSDLERVVNKESGLLGISGLSSDLRVLEKAWHEGHERARLAIKTFVHRIARHIAGHAASLHRLDGIIFTGGIGENSVLIRQLAIEHLGVLGLTLDVEMNKQPNSHGERIISANPSQVICAVIPTNEEKMIALDAIHLGNVKAPVEFA.

Residues Asn11 and Lys18 each contribute to the ATP site. Asn11 is a Mg(2+) binding site. Substrate is bound at residue Arg86. The active-site Proton donor/acceptor is Asp143. ATP contacts are provided by residues His175, 203–207 (HLGNG), 278–280 (DLR), and 326–330 (GIGEN).

This sequence belongs to the acetokinase family. TdcD subfamily. As to quaternary structure, homodimer. Mg(2+) serves as cofactor.

It catalyses the reaction propanoate + ATP = propanoyl phosphate + ADP. The protein operates within amino-acid degradation; L-threonine degradation via propanoate pathway; propanoate from L-threonine: step 4/4. Catalyzes the conversion of propionyl phosphate and ADP to propionate and ATP. The chain is Propionate kinase from Salmonella agona (strain SL483).